The sequence spans 587 residues: Formate--tetrahydrofolate ligase (587 aa).

Residue 73–80 (TPLGEGKS) participates in ATP binding.

Belongs to the formate--tetrahydrofolate ligase family.

It catalyses the reaction (6S)-5,6,7,8-tetrahydrofolate + formate + ATP = (6R)-10-formyltetrahydrofolate + ADP + phosphate. It functions in the pathway one-carbon metabolism; tetrahydrofolate interconversion. This chain is Formate--tetrahydrofolate ligase, found in Syntrophobacter fumaroxidans (strain DSM 10017 / MPOB).